A 663-amino-acid chain; its full sequence is Probable acetolactate synthase 2, chloroplastic (663 aa).

Low complexity predominate over residues 1–26; sequence MAAAAAAASLSVSDAAAKLPKPGGQV. Residues 1-56 form a disordered region; sequence MAAAAAAASLSVSDAAAKLPKPGGQVQRRRDRDRPRVDAAACTRDSRRPTRERCST. The transit peptide at 1 to 79 directs the protein to the chloroplast; that stretch reads MAAAAAAASL…TPVRAPVRTR (79 aa). 2 stretches are compositionally biased toward basic and acidic residues: residues 28 to 37 and 44 to 54; these read RRRDRDRPRV and RDSRRPTRERC. Glu132 serves as a coordination point for thiamine diphosphate. A disulfide bridge links Cys152 with Cys298. Residues Arg234, 340–361, and 383–402 each bind FAD; these read HGTV…LGVR and DIDP…ICAD. The interval 478–558 is thiamine pyrophosphate binding; it reads QHQMWATQHY…VKVMVLNNQH (81 aa). Positions 529 and 556 each coordinate Mg(2+).

This sequence belongs to the TPP enzyme family. Mg(2+) is required as a cofactor. It depends on thiamine diphosphate as a cofactor.

The protein resides in the plastid. It localises to the chloroplast. The catalysed reaction is 2 pyruvate + H(+) = (2S)-2-acetolactate + CO2. It participates in amino-acid biosynthesis; L-isoleucine biosynthesis; L-isoleucine from 2-oxobutanoate: step 1/4. Its pathway is amino-acid biosynthesis; L-valine biosynthesis; L-valine from pyruvate: step 1/4. The polypeptide is Probable acetolactate synthase 2, chloroplastic (ALS2) (Oryza sativa subsp. japonica (Rice)).